A 206-amino-acid chain; its full sequence is MDFINRTTPEIAKDLLGVKLIFDDGENQFSGYIVETEAYLGKIDEAAHSYNGRQTPRVQSMYKDGGTIYAHVMHTHLLINLVTQPAGTAEGVLIRALEPELITDQMIENRNGKVGIDVTNGPGKWTRAFNMSMALDGLRLNEGPLSIDTKARKYPSSILESPRIGVPNKGEWTHKPLRFTVEGNPYVSRMRKSDMLAAEDTWKKHK.

This sequence belongs to the DNA glycosylase MPG family.

This is Putative 3-methyladenine DNA glycosylase from Staphylococcus carnosus (strain TM300).